Reading from the N-terminus, the 347-residue chain is 3-isopropylmalate dehydrogenase (347 aa).

76–87 serves as a coordination point for NAD(+); sequence GPKWTDPNNRPE. Substrate is bound by residues Arg94, Arg104, Arg132, and Asp217. Asp217, Asp241, and Asp245 together coordinate Mg(2+). 275-287 lines the NAD(+) pocket; sequence GSAPDIANEDKAN.

The protein belongs to the isocitrate and isopropylmalate dehydrogenases family. LeuB type 1 subfamily. As to quaternary structure, homodimer. Requires Mg(2+) as cofactor. Mn(2+) is required as a cofactor.

It localises to the cytoplasm. The catalysed reaction is (2R,3S)-3-isopropylmalate + NAD(+) = 4-methyl-2-oxopentanoate + CO2 + NADH. It functions in the pathway amino-acid biosynthesis; L-leucine biosynthesis; L-leucine from 3-methyl-2-oxobutanoate: step 3/4. In terms of biological role, catalyzes the oxidation of 3-carboxy-2-hydroxy-4-methylpentanoate (3-isopropylmalate) to 3-carboxy-4-methyl-2-oxopentanoate. The product decarboxylates to 4-methyl-2 oxopentanoate. The chain is 3-isopropylmalate dehydrogenase from Staphylococcus epidermidis (strain ATCC 35984 / DSM 28319 / BCRC 17069 / CCUG 31568 / BM 3577 / RP62A).